A 2144-amino-acid chain; its full sequence is Reducing polyketide synthase PKS2 (2144 aa).

The Ketosynthase family 3 (KS3) domain maps to 10–436 (PMPLAIIGMS…GSNSHCIVRA (427 aa)). Residues C183, H319, and H360 each act as for beta-ketoacyl synthase activity in the active site. Residues 538–855 (VFAFTGQGAQ…VPSLHRGQNA (318 aa)) form a malonyl-CoA:ACP transacylase (MAT) region. The interval 924-1058 (HDLLGSINSS…ALVKCEATTD (135 aa)) is N-terminal hotdog fold. Residues 924 to 1214 (HDLLGSINSS…RSYSIDGTTD (291 aa)) form a dehydratase (DH) domain region. In terms of domain architecture, PKS/mFAS DH spans 924 to 1237 (HDLLGSINSS…LAVEATLAPQ (314 aa)). A C-terminal hotdog fold region spans residues 1076 to 1237 (HSCVGSPLLY…LAVEATLAPQ (162 aa)). An enoyl reductase (ER) domain region spans residues 1461 to 1747 (GMPDSLYLQR…SETDSKKLLL (287 aa)). Positions 1771-1948 (AVYLLVGGSG…PATSLALTAV (178 aa)) are ketoreductase (KR) domain. Residues 2059–2136 (EATQLLLAAI…KIVDSVIVKR (78 aa)) form the Carrier domain. At S2096 the chain carries O-(pantetheine 4'-phosphoryl)serine.

Its pathway is mycotoxin biosynthesis. Its function is as follows. Reducing polyketide synthase (PKS); part of the Tox1A locus, one of the 2 loci that mediate the biosynthesis of T-toxin, a family of linear polyketides 37 to 45 carbons in length, of which the major component is 41 carbons, and which leads to high virulence to maize. One of the PKSs (PKS1 or PKS2) could synthesize a precursor, used subsequently by the other PKS as starter unit, to add additional carbons. Variability in the length of the final carbon backbone C35-47 could be achieved by varying the number of condensation cycles, or use of different starter or extender units or might be due to decarboxylation of the penultimate product, catalyzed by DEC1. Additional proteins are required for the biosynthesis of T-toxin, including oxidoreductases RED1, RED2, RED3, LAM1 and OXI1, as well as esterase TOX9. The sequence is that of Reducing polyketide synthase PKS2 from Cochliobolus heterostrophus (strain C4 / ATCC 48331 / race T) (Southern corn leaf blight fungus).